A 234-amino-acid chain; its full sequence is uncharacterized protein (234 aa).

In terms of domain architecture, tRNA-binding spans 103-211 (LAKKVPFVVC…SHIKIGKSFL (109 aa)).

This is an uncharacterized protein from Mycoplasma pneumoniae (strain ATCC 29342 / M129 / Subtype 1) (Mycoplasmoides pneumoniae).